Here is a 306-residue protein sequence, read N- to C-terminus: Acetyl-coenzyme A carboxylase carboxyl transferase subunit beta (306 aa).

Residues 25 to 294 enclose the CoA carboxyltransferase N-terminal domain; that stretch reads LWIKDPTSGE…VFNPSDPSPT (270 aa). A disordered region spans residues 286–306; sequence FNPSDPSPTDSQTSLSTTKAA. The span at 288–306 shows a compositional bias: low complexity; it reads PSDPSPTDSQTSLSTTKAA.

It belongs to the AccD/PCCB family. In terms of assembly, acetyl-CoA carboxylase is a heterohexamer composed of biotin carboxyl carrier protein (AccB), biotin carboxylase (AccC) and two subunits each of ACCase subunit alpha (AccA) and ACCase subunit beta (AccD).

It localises to the cytoplasm. It catalyses the reaction N(6)-carboxybiotinyl-L-lysyl-[protein] + acetyl-CoA = N(6)-biotinyl-L-lysyl-[protein] + malonyl-CoA. It functions in the pathway lipid metabolism; malonyl-CoA biosynthesis; malonyl-CoA from acetyl-CoA: step 1/1. Functionally, component of the acetyl coenzyme A carboxylase (ACC) complex. Biotin carboxylase (BC) catalyzes the carboxylation of biotin on its carrier protein (BCCP) and then the CO(2) group is transferred by the transcarboxylase to acetyl-CoA to form malonyl-CoA. The polypeptide is Acetyl-coenzyme A carboxylase carboxyl transferase subunit beta (Bartonella grahamii (strain as4aup)).